A 230-amino-acid chain; its full sequence is Cytidylate kinase (230 aa).

An ATP-binding site is contributed by 12–20 (GPSGAGKGT).

Belongs to the cytidylate kinase family. Type 1 subfamily.

The protein localises to the cytoplasm. It carries out the reaction CMP + ATP = CDP + ADP. The catalysed reaction is dCMP + ATP = dCDP + ADP. This chain is Cytidylate kinase, found in Shewanella halifaxensis (strain HAW-EB4).